The following is a 460-amino-acid chain: MLSIYNTLTKSKEVFKPLDGNKVRMYVCGMTVYDYCHLGHGRSMVAFDLVTRWLRFSGYELTYVRNITDIDDKIINRARENGESFDALTARMIEAMHEDEARLNILKPDMEPRATDHIPGMHAMIQTLIDKGYAYAPGNGDVYYRVGKFQGYGKLSRKKIEDLRIGARIEVDESKEDPLDFVLWKGVKPGEPSWESPWGAGRPGWHIECSVMSTCCLGETFDIHGGGSDLEFPHHENEIAQSEAATGKTYANAWLHCGMIRINGEKMSKSLNNFFTIRDVLEKYHPEVVRYLLVSSHYRSAINYSEDSLRESKAALERFYHALKGLPVAEPAGGEAFVERFSTAMNDDFGTPEACAVLFEMVREINRLRESDIAAAACLAARLKQLASVLGVLQLEADDFLRAGAEGRVDAAEVEALIQARLAARAAKDWAESDRIRDRITAMGVLLEDGKGGTTWRLAD.

Cysteine 28 is a Zn(2+) binding site. The 'HIGH' region signature appears at 30 to 40; that stretch reads MTVYDYCHLGH. 3 residues coordinate Zn(2+): cysteine 209, histidine 234, and glutamate 238. Residues 266-270 carry the 'KMSKS' region motif; that stretch reads KMSKS. An ATP-binding site is contributed by lysine 269.

The protein belongs to the class-I aminoacyl-tRNA synthetase family. In terms of assembly, monomer. Requires Zn(2+) as cofactor.

It localises to the cytoplasm. It carries out the reaction tRNA(Cys) + L-cysteine + ATP = L-cysteinyl-tRNA(Cys) + AMP + diphosphate. This Pseudomonas syringae pv. syringae (strain B728a) protein is Cysteine--tRNA ligase.